Here is a 293-residue protein sequence, read N- to C-terminus: AKT-interacting protein homolog A (293 aa).

A compositionally biased stretch (polar residues) spans 1 to 11; the sequence is MNPFWNMSSAS. A disordered region spans residues 1-45; sequence MNPFWNMSSASVRKRSENDEKISTGDQKISPPRSSSAKKQLPPIP. The span at 14–23 shows a compositional bias: basic and acidic residues; sequence KRSENDEKIS. The segment covering 24–38 has biased composition (polar residues); the sequence is TGDQKISPPRSSSAK. In terms of domain architecture, UBC core spans 75–223; the sequence is YLEYSLLAEF…VVDSVKLCNS (149 aa). Positions 256–266 are enriched in basic and acidic residues; that stretch reads AQKKKSEEQSK. The interval 256–293 is disordered; sequence AQKKKSEEQSKGLHVSGLSWVKPGSVLPFSKEENSLQT.

It belongs to the ubiquitin-conjugating enzyme family. FTS subfamily.

It is found in the cytoplasm. The protein resides in the cell membrane. Its function is as follows. May function to promote vesicle trafficking and/or fusion. May also regulate apoptosis. This is AKT-interacting protein homolog A (aktip-a) from Xenopus laevis (African clawed frog).